Here is a 55-residue protein sequence, read N- to C-terminus: Large ribosomal subunit protein bL33 (55 aa).

It belongs to the bacterial ribosomal protein bL33 family.

This Yersinia enterocolitica serotype O:8 / biotype 1B (strain NCTC 13174 / 8081) protein is Large ribosomal subunit protein bL33.